A 324-amino-acid chain; its full sequence is Signal peptidase I (324 aa).

Met1 is subject to Blocked amino end (Met). Over 1–3 (MAN) the chain is Periplasmic. A helical membrane pass occupies residues 4 to 22 (MFALILVIATLVTGILWCV). Residues 23-58 (DKFFFAPKRRERQAAAQAAAGDSLDKATLKKVAPKP) lie on the Cytoplasmic side of the membrane. A helical transmembrane segment spans residues 59–77 (GWLETGASVFPVLAIVLIV). Over 78–324 (RSFIYEPFQI…LRLSRIGGIH (247 aa)) the chain is Periplasmic. Catalysis depends on residues Ser91 and Lys146. Cys171 and Cys177 are disulfide-bonded.

Belongs to the peptidase S26 family.

It localises to the cell inner membrane. It carries out the reaction Cleavage of hydrophobic, N-terminal signal or leader sequences from secreted and periplasmic proteins.. This Escherichia coli (strain K12) protein is Signal peptidase I (lepB).